Consider the following 473-residue polypeptide: Putative F-box/LRR-repeat protein At3g59170 (473 aa).

Residues 6 to 54 form the F-box domain; sequence KDMINVLPDALLCHILSFLTTKEAASTSLLSRRWRYLLAFVPNLEFDDS. LRR repeat units lie at residues 168–194, 196–221, 229–254, 333–364, and 365–390; these read TIKI…YLQS, MFDE…VLDG, SFTV…GYMH, VLYL…TIKS, and DPNV…VFQG.

In Arabidopsis thaliana (Mouse-ear cress), this protein is Putative F-box/LRR-repeat protein At3g59170.